The following is a 358-amino-acid chain: Alanine racemase (358 aa).

K35 acts as the Proton acceptor; specific for D-alanine in catalysis. K35 bears the N6-(pyridoxal phosphate)lysine mark. Residue R130 participates in substrate binding. Y255 acts as the Proton acceptor; specific for L-alanine in catalysis. M303 is a substrate binding site.

This sequence belongs to the alanine racemase family. The cofactor is pyridoxal 5'-phosphate.

It catalyses the reaction L-alanine = D-alanine. The protein operates within amino-acid biosynthesis; D-alanine biosynthesis; D-alanine from L-alanine: step 1/1. Functionally, catalyzes the interconversion of L-alanine and D-alanine. May also act on other amino acids. The polypeptide is Alanine racemase (alr) (Shewanella baltica (strain OS155 / ATCC BAA-1091)).